We begin with the raw amino-acid sequence, 296 residues long: Elongation factor Ts (296 aa).

Residues 82–85 (TDFV) are involved in Mg(2+) ion dislocation from EF-Tu.

It belongs to the EF-Ts family.

The protein resides in the cytoplasm. Functionally, associates with the EF-Tu.GDP complex and induces the exchange of GDP to GTP. It remains bound to the aminoacyl-tRNA.EF-Tu.GTP complex up to the GTP hydrolysis stage on the ribosome. The protein is Elongation factor Ts of Coxiella burnetii (strain CbuG_Q212) (Coxiella burnetii (strain Q212)).